A 285-amino-acid chain; its full sequence is Formamidopyrimidine-DNA glycosylase (285 aa).

The active-site Schiff-base intermediate with DNA is P2. E3 acts as the Proton donor in catalysis. The Proton donor; for beta-elimination activity role is filled by K61. Residues H102, R121, and K163 each coordinate DNA. The FPG-type zinc-finger motif lies at 249-283 (NAYGQAGKPCARCGTPIARETFMNRGSHFCNRCQK). R273 functions as the Proton donor; for delta-elimination activity in the catalytic mechanism.

The protein belongs to the FPG family. Monomer. It depends on Zn(2+) as a cofactor.

The enzyme catalyses Hydrolysis of DNA containing ring-opened 7-methylguanine residues, releasing 2,6-diamino-4-hydroxy-5-(N-methyl)formamidopyrimidine.. It catalyses the reaction 2'-deoxyribonucleotide-(2'-deoxyribose 5'-phosphate)-2'-deoxyribonucleotide-DNA = a 3'-end 2'-deoxyribonucleotide-(2,3-dehydro-2,3-deoxyribose 5'-phosphate)-DNA + a 5'-end 5'-phospho-2'-deoxyribonucleoside-DNA + H(+). Involved in base excision repair of DNA damaged by oxidation or by mutagenic agents. Acts as a DNA glycosylase that recognizes and removes damaged bases. Has a preference for oxidized purines, such as 7,8-dihydro-8-oxoguanine (8-oxoG). Has AP (apurinic/apyrimidinic) lyase activity and introduces nicks in the DNA strand. Cleaves the DNA backbone by beta-delta elimination to generate a single-strand break at the site of the removed base with both 3'- and 5'-phosphates. This Corynebacterium efficiens (strain DSM 44549 / YS-314 / AJ 12310 / JCM 11189 / NBRC 100395) protein is Formamidopyrimidine-DNA glycosylase.